We begin with the raw amino-acid sequence, 602 residues long: Elongation factor 4 (602 aa).

Positions 7-189 (KKIRNFSIIA…SIVKNVPSPK (183 aa)) constitute a tr-type G domain. GTP is bound by residues 19–24 (DHGKST) and 136–139 (NKID).

It belongs to the TRAFAC class translation factor GTPase superfamily. Classic translation factor GTPase family. LepA subfamily.

It is found in the cell membrane. The enzyme catalyses GTP + H2O = GDP + phosphate + H(+). Required for accurate and efficient protein synthesis under certain stress conditions. May act as a fidelity factor of the translation reaction, by catalyzing a one-codon backward translocation of tRNAs on improperly translocated ribosomes. Back-translocation proceeds from a post-translocation (POST) complex to a pre-translocation (PRE) complex, thus giving elongation factor G a second chance to translocate the tRNAs correctly. Binds to ribosomes in a GTP-dependent manner. The protein is Elongation factor 4 of Alkaliphilus oremlandii (strain OhILAs) (Clostridium oremlandii (strain OhILAs)).